Consider the following 488-residue polypeptide: Calcium uniporter protein, mitochondrial (488 aa).

Residues 1-74 (MRALVSRTPI…RSFQLSASSR (74 aa)) constitute a mitochondrion transit peptide. The interval 65 to 117 (RSFQLSASSRDKRGPQSAEPDPLERLEVKKVQQQHENEKDDSGRDTKSGGKVA) is disordered. At 75–339 (DKRGPQSAEP…ECDALAHRGA (265 aa)) the chain is on the mitochondrial matrix side. Residues 86-112 (PLERLEVKKVQQQHENEKDDSGRDTKS) are compositionally biased toward basic and acidic residues. Residues 340–361 (QRVALGGFGILAFWWYIVYKLT) traverse the membrane as a helical segment. Over 362–370 (FETDLGWDT) the chain is Mitochondrial intermembrane. The Selectivity filter motif lies at 368–376 (WDTMEPVTY). A helical transmembrane segment spans residues 371 to 391 (MEPVTYLVSLSTLMGGYLWFL). Ca(2+) is bound at residue glutamate 372. Residues 392-488 (YHNREISYRS…ERPKDDRDDD (97 aa)) are Mitochondrial matrix-facing. The tract at residues 464–488 (ALKKERRLKNGSQKEERPKDDRDDD) is disordered. The segment covering 475-488 (SQKEERPKDDRDDD) has biased composition (basic and acidic residues).

The protein belongs to the MCU (TC 1.A.77) family. Homotetramer, assembles in a dimer or dimers configuration with two interfaces.

The protein resides in the mitochondrion inner membrane. The catalysed reaction is Ca(2+)(in) = Ca(2+)(out). Inhibited by ruthenium red or its derivative Ru360. Highly selective calcium channel localized to the inner mitochondrial membrane, which mediates calcium uptake into the mitochondrial matrix. Mitochondrial calcium homeostasis plays key roles in cellular physiology and regulates ATP production, cytoplasmic calcium signals and activation of cell death pathways. Sufficient to operate as a pore-forming channel without the need of calcium-sensor or auxiliary subunit. The sequence is that of Calcium uniporter protein, mitochondrial from Neosartorya fischeri (strain ATCC 1020 / DSM 3700 / CBS 544.65 / FGSC A1164 / JCM 1740 / NRRL 181 / WB 181) (Aspergillus fischerianus).